We begin with the raw amino-acid sequence, 81 residues long: Sulfur carrier protein TusA (81 aa).

Cysteine 19 (cysteine persulfide intermediate) is an active-site residue.

This sequence belongs to the sulfur carrier protein TusA family.

It localises to the cytoplasm. Functionally, sulfur carrier protein which probably makes part of a sulfur-relay system. This is Sulfur carrier protein TusA from Shewanella sp. (strain MR-4).